Reading from the N-terminus, the 243-residue chain is Polycomb group RING finger protein 1 (243 aa).

Residue Lys12 forms a Glycyl lysine isopeptide (Lys-Gly) (interchain with G-Cter in SUMO2) linkage. The RING-type zinc finger occupies 35–74 (CCLCAGYFVDATTITECLHTFCKSCIVKYLQTSKYCPMCN). The segment at 74 to 231 (NIKIHETQPL…LSRWFGKPSP (158 aa)) is necessary for repressor activity. Residue Lys76 forms a Glycyl lysine isopeptide (Lys-Gly) (interchain with G-Cter in SUMO2) linkage. A required for the interaction with the KDM2B-SKP1 heterodimeric complex region spans residues 138 to 239 (LPFTSFDHYY…SPLLLQYSVK (102 aa)). The interval 151–239 (EQLSLCLERL…SPLLLQYSVK (89 aa)) is RING-finger and WD40-associated ubiquitin-like domain (RAWUL); sufficient for interaction with BCOR and BCORL1.

Interacts with BCORL1, forming heterodimers. The PCGF1-BCORL1 heterodimeric complex interacts with the KDM2B-SKP1 heterodimeric complex to form a homotetrameric polycomb repression complex 1 (PRC1.1). Component of the repressive BCOR complex containing a Polycomb group subcomplex at least composed of RYBP, RING1 and RNF2/RING2. Specifically interacts with BCOR, RING1 and RNF2/RING2. Component of a PRC1-like complex. Interacts with CBX6, CBX7 and CBX8. Interacts with DPPA4, NANOG, POU5F1 and RYBP. Highly expressed in brain, cerebellum, heart and testis.

It is found in the nucleus. Component of the Polycomb group (PcG) multiprotein BCOR complex, a complex required to maintain the transcriptionally repressive state of some genes, such as BCL6 and the cyclin-dependent kinase inhibitor, CDKN1A. Transcriptional repressor that may be targeted to the DNA by BCL6; this transcription repressor activity may be related to PKC signaling pathway. Represses CDKN1A expression by binding to its promoter, and this repression is dependent on the retinoic acid response element (RARE element). Promotes cell cycle progression and enhances cell proliferation as well. May have a positive role in tumor cell growth by down-regulating CDKN1A. Component of a Polycomb group (PcG) multiprotein PRC1-like complex, a complex class required to maintain the transcriptionally repressive state of many genes, including Hox genes, throughout development. PcG PRC1 complex acts via chromatin remodeling and modification of histones; it mediates monoubiquitination of histone H2A 'Lys-119', rendering chromatin heritably changed in its expressibility. Within the PRC1-like complex, regulates RNF2 ubiquitin ligase activity. Regulates the expression of DPPA4 and NANOG in the NT2 embryonic carcinoma cells. The sequence is that of Polycomb group RING finger protein 1 (Pcgf1) from Rattus norvegicus (Rat).